The chain runs to 405 residues: Argininosuccinate synthase (405 aa).

Residues 11 to 19 (AYSGGLDTS) and Ala38 each bind ATP. Residues Tyr91 and Ser96 each coordinate L-citrulline. Position 121 (Gly121) interacts with ATP. L-aspartate contacts are provided by Thr123, Asn127, and Asp128. Asn127 contributes to the L-citrulline binding site. L-citrulline-binding residues include Arg131, Ser181, Ser190, Glu266, and Tyr278.

Belongs to the argininosuccinate synthase family. Type 1 subfamily. Homotetramer.

The protein resides in the cytoplasm. It carries out the reaction L-citrulline + L-aspartate + ATP = 2-(N(omega)-L-arginino)succinate + AMP + diphosphate + H(+). The protein operates within amino-acid biosynthesis; L-arginine biosynthesis; L-arginine from L-ornithine and carbamoyl phosphate: step 2/3. The chain is Argininosuccinate synthase from Nitratiruptor sp. (strain SB155-2).